We begin with the raw amino-acid sequence, 377 residues long: Interferon gamma receptor 1 (377 aa).

An N-terminal signal peptide occupies residues 1–23; sequence MRTQIYISVTVLILLLKKSDLEA. The Extracellular portion of the chain corresponds to 24-235; it reads VRVPSPESVS…IRRYTPFTVY (212 aa). In terms of domain architecture, Fibronectin type-III spans 26–117; the sequence is VPSPESVSVQ…DFFIFSFNEN (92 aa). 2 N-linked (GlcNAc...) asparagine glycosylation sites follow: Asn-78 and Asn-186. Residues 236–256 traverse the membrane as a helical segment; it reads LYPVLGVTLTLLFITGIIILL. At 257-377 the chain is on the cytoplasmic side; that stretch reads EKKCNSEMKK…TVDSYGPRLL (121 aa). Residues 326-377 are disordered; sequence VYSEDKNSYGPNDLVEDEQSDLSDFYDCPHAPKQKREMSPGDTVDSYGPRLL.

This sequence belongs to the type II cytokine receptor family. In terms of tissue distribution, highly expressed in spleen. Also detected in brain, kidney, gill, intestine and heart. Expressed at very low levels in muscle. In immune cell populations, shows highest expression in monocytes, and slightly lower expression in peripheral blood leukocytes, splenocytes, neutrophils and mature macrophages.

The protein localises to the cell membrane. Functionally, receptor which shows binding specificity for the cytokine ifng1r (interferon gamma-related). This Carassius auratus (Goldfish) protein is Interferon gamma receptor 1.